Consider the following 361-residue polypeptide: Zygote arrest protein 1 (361 aa).

Disordered stretches follow at residues 68 to 129 and 142 to 252; these read GPRP…PRSW and GLSS…EQDK. A compositionally biased stretch (low complexity) spans 116 to 128; sequence PRSPARAGRPPRS. At Thr-155 the chain carries Phosphothreonine. Residues 238–252 show a composition bias toward basic and acidic residues; the sequence is ASRDRASPQSTEQDK. The 3CxxC-type zinc finger occupies 263–346; the sequence is KYGYYHCKDC…RQDLCGRCKD (84 aa).

Belongs to the ZAR1 family. As to quaternary structure, interacts with YBX2. In terms of processing, phosphorylation by CDK1 does not regulate formation of MARDO (mitochondria-associated ribonucleoprotein domain) membraneless compartment. Ubiquitinated and degradaded by the proteasome during oocyte meiotic maturation, leading to MARDO (mitochondria-associated ribonucleoprotein domain) membraneless compartment dissolution.

It localises to the cytoplasm. Its subcellular location is the cytoplasmic ribonucleoprotein granule. In terms of biological role, mRNA-binding protein that mediates formation of MARDO (mitochondria-associated ribonucleoprotein domain), a membraneless compartment that stores maternal mRNAs in oocytes. MARDO assembly around mitochondria is directed by an increase in mitochondrial membrane potential during oocyte growth. Promotes formation of MARDO phase-separated membraneless compartment by undergoing liquid-liquid phase separation upon binding to maternal mRNAs. Binds to the 3'-UTR of maternal mRNAs. Maternal mRNAs stored in the MARDO are translationally repressed. Essential for female fertility and oocyte-to-embryo transition by coordinating maternal mRNA storage, translation and degradation. The polypeptide is Zygote arrest protein 1 (Rattus norvegicus (Rat)).